We begin with the raw amino-acid sequence, 1802 residues long: U3 small nucleolar RNA-associated protein 10 (1802 aa).

The HEAT 1 repeat unit spans residues 581–618 (MDLQALLPFVLVTLADPSERVRREAAGILTIIGSLHKN). Transmembrane regions (helical) follow at residues 946–966 (VQSG…AIVN) and 1002–1022 (ALLL…HSVM). HEAT repeat units follow at residues 1046–1083 (QTID…AFEH), 1253–1290 (LSLV…QNPE), 1297–1335 (TRML…KYGK), and 1758–1795 (ALLP…VLGE).

The protein belongs to the HEATR1/UTP10 family. Component of the ribosomal small subunit (SSU) processome.

It localises to the nucleus. It is found in the nucleolus. The protein localises to the membrane. Involved in nucleolar processing of pre-18S ribosomal RNA. Involved in ribosome biosynthesis. This Aspergillus oryzae (strain ATCC 42149 / RIB 40) (Yellow koji mold) protein is U3 small nucleolar RNA-associated protein 10.